The following is a 700-amino-acid chain: Methionine synthase reductase (700 aa).

A Flavodoxin-like domain is found at 4 to 147 (FLLLYATQRG…VVEPWIDGLW (144 aa)). Residues 10 to 14 (TQRGQ) and 93 to 124 (LLGLGDSEYTYFCNGGKVIDKRLQELGAQHFY) contribute to the FMN site. A hinge region spans residues 168–247 (TLAQASDAPL…SSLSIPAVSP (80 aa)). Phosphoserine is present on residues serine 173 and serine 190. Positions 272-534 (DPIFQVPISK…PRATNSFHLP (263 aa)) constitute an FAD-binding FR-type domain. Lysine 292 lines the NADP(+) pocket. FAD-binding positions include 452–455 (RPYS) and 488–491 (GVCT). Residues 611 to 612 (SR), 626 to 628 (YVQ), and aspartate 661 contribute to the NADP(+) site. Tryptophan 699 is an FAD binding site.

In terms of assembly, forms a multiprotein complex with MMACHC, MMADHC and MTR. FAD is required as a cofactor. It depends on FMN as a cofactor.

The protein localises to the cytoplasm. The enzyme catalyses 2 methylcob(III)alamin-[methionine synthase] + 2 S-adenosyl-L-homocysteine + NADP(+) + H(+) = 2 cob(II)alamin-[methionine synthase] + 2 S-adenosyl-L-methionine + NADPH. It carries out the reaction 2 cob(II)alamin + A + 2 H2O + 2 H(+) = 2 aquacob(III)alamin + AH2. Its function is as follows. Key enzyme in methionine and folate homeostasis responsible for the reactivation of methionine synthase (MTR/MS) activity by catalyzing the reductive methylation of MTR-bound cob(II)alamin. Cobalamin (vitamin B12) forms a complex with MTR to serve as an intermediary in methyl transfer reactions that cycles between MTR-bound methylcob(III)alamin and MTR bound-cob(I)alamin forms, and occasional oxidative escape of the cob(I)alamin intermediate during the catalytic cycle leads to the inactive cob(II)alamin species. The processing of cobalamin in the cytosol occurs in a multiprotein complex composed of at least MMACHC, MMADHC, MTRR and MTR which may contribute to shuttle safely and efficiently cobalamin towards MTR in order to produce methionine. Also necessary for the utilization of methyl groups from the folate cycle, thereby affecting transgenerational epigenetic inheritance. Also acts as a molecular chaperone for methionine synthase by stabilizing apoMTR and incorporating methylcob(III)alamin into apoMTR to form the holoenzyme. Also serves as an aquacob(III)alamin reductase by reducing aquacob(III)alamin to cob(II)alamin; this reduction leads to stimulation of the conversion of apoMTR and aquacob(III)alamin to MTR holoenzyme. The chain is Methionine synthase reductase (Mtrr) from Rattus norvegicus (Rat).